Here is a 67-residue protein sequence, read N- to C-terminus: Large ribosomal subunit protein uL29 (67 aa).

It belongs to the universal ribosomal protein uL29 family.

In Zymomonas mobilis subsp. mobilis (strain ATCC 31821 / ZM4 / CP4), this protein is Large ribosomal subunit protein uL29.